Consider the following 552-residue polypeptide: Dihydroxy-acid dehydratase (552 aa).

Position 78 (D78) interacts with Mg(2+). C119 provides a ligand contact to [2Fe-2S] cluster. The Mg(2+) site is built by D120 and K121. An N6-carboxylysine modification is found at K121. Residue C191 coordinates [2Fe-2S] cluster. E442 provides a ligand contact to Mg(2+). S468 functions as the Proton acceptor in the catalytic mechanism.

This sequence belongs to the IlvD/Edd family. As to quaternary structure, homodimer. It depends on [2Fe-2S] cluster as a cofactor. The cofactor is Mg(2+).

The catalysed reaction is (2R)-2,3-dihydroxy-3-methylbutanoate = 3-methyl-2-oxobutanoate + H2O. The enzyme catalyses (2R,3R)-2,3-dihydroxy-3-methylpentanoate = (S)-3-methyl-2-oxopentanoate + H2O. It functions in the pathway amino-acid biosynthesis; L-isoleucine biosynthesis; L-isoleucine from 2-oxobutanoate: step 3/4. It participates in amino-acid biosynthesis; L-valine biosynthesis; L-valine from pyruvate: step 3/4. Functionally, functions in the biosynthesis of branched-chain amino acids. Catalyzes the dehydration of (2R,3R)-2,3-dihydroxy-3-methylpentanoate (2,3-dihydroxy-3-methylvalerate) into 2-oxo-3-methylpentanoate (2-oxo-3-methylvalerate) and of (2R)-2,3-dihydroxy-3-methylbutanoate (2,3-dihydroxyisovalerate) into 2-oxo-3-methylbutanoate (2-oxoisovalerate), the penultimate precursor to L-isoleucine and L-valine, respectively. The chain is Dihydroxy-acid dehydratase from Moorella thermoacetica (strain ATCC 39073 / JCM 9320).